Reading from the N-terminus, the 394-residue chain is Elongation factor Tu (394 aa).

The tr-type G domain occupies 10–204; it reads KPHVNIGTIG…AVDSYIPQPI (195 aa). Positions 19 to 26 are G1; it reads GHVDHGKT. 19-26 serves as a coordination point for GTP; the sequence is GHVDHGKT. Threonine 26 contributes to the Mg(2+) binding site. Positions 60–64 are G2; that stretch reads GITIS. The G3 stretch occupies residues 81-84; the sequence is DCPG. Residues 81–85 and 136–139 each bind GTP; these read DCPGH and NKVD. The segment at 136 to 139 is G4; sequence NKVD. Residues 174–176 are G5; it reads SAL.

It belongs to the TRAFAC class translation factor GTPase superfamily. Classic translation factor GTPase family. EF-Tu/EF-1A subfamily. As to quaternary structure, monomer.

It localises to the cytoplasm. The catalysed reaction is GTP + H2O = GDP + phosphate + H(+). Functionally, GTP hydrolase that promotes the GTP-dependent binding of aminoacyl-tRNA to the A-site of ribosomes during protein biosynthesis. The sequence is that of Elongation factor Tu from Rickettsia prowazekii (strain Madrid E).